Here is a 408-residue protein sequence, read N- to C-terminus: Serine/threonine transporter SstT (408 aa).

9 helical membrane-spanning segments follow: residues 11 to 31, 43 to 63, 81 to 101, 141 to 161, 192 to 212, 216 to 236, 298 to 318, 330 to 350, and 357 to 377; these read LANGSLVLQILLGIAAGVILA, FLGSLFVGALKAIAPILVFIL, PIVVLYLFGTFAAALTAVVLS, ALMTGNYIGILAWGVGLGLAL, IGIFGLVAATFAETGFAAIAG, LLAVLLSAMAIIALIVNPLIV, MGGAAITITVLTLAAVHTLGI, VVAAVSACGASGVAGGSLLLI, and FGISNDIAMQVVAVGFIIGVI.

It belongs to the dicarboxylate/amino acid:cation symporter (DAACS) (TC 2.A.23) family.

It localises to the cell inner membrane. It carries out the reaction L-serine(in) + Na(+)(in) = L-serine(out) + Na(+)(out). It catalyses the reaction L-threonine(in) + Na(+)(in) = L-threonine(out) + Na(+)(out). Its function is as follows. Involved in the import of serine and threonine into the cell, with the concomitant import of sodium (symport system). This chain is Serine/threonine transporter SstT, found in Shewanella sp. (strain W3-18-1).